A 362-amino-acid polypeptide reads, in one-letter code: Glutamate 5-kinase (362 aa).

Position 3 (K3) interacts with ATP. Residues S43, D128, and N140 each coordinate substrate. ATP-binding positions include 160 to 161 and 202 to 208; these read TD and TGGMRTK. The PUA domain maps to 267-348; that stretch reads AGAILVDAGA…RDIENVLGYS (82 aa).

It belongs to the glutamate 5-kinase family.

The protein localises to the cytoplasm. It carries out the reaction L-glutamate + ATP = L-glutamyl 5-phosphate + ADP. It functions in the pathway amino-acid biosynthesis; L-proline biosynthesis; L-glutamate 5-semialdehyde from L-glutamate: step 1/2. Its function is as follows. Catalyzes the transfer of a phosphate group to glutamate to form L-glutamate 5-phosphate. This chain is Glutamate 5-kinase, found in Xanthomonas oryzae pv. oryzae (strain MAFF 311018).